The sequence spans 93 residues: Small ribosomal subunit protein uS19 (93 aa).

This sequence belongs to the universal ribosomal protein uS19 family.

Protein S19 forms a complex with S13 that binds strongly to the 16S ribosomal RNA. In Renibacterium salmoninarum (strain ATCC 33209 / DSM 20767 / JCM 11484 / NBRC 15589 / NCIMB 2235), this protein is Small ribosomal subunit protein uS19.